Consider the following 172-residue polypeptide: Acetolactate synthase small subunit (172 aa).

The ACT domain occupies 4-78; sequence TLSVLVEDEA…NVIKVQDITE (75 aa).

Belongs to the acetolactate synthase small subunit family. In terms of assembly, dimer of large and small chains.

The catalysed reaction is 2 pyruvate + H(+) = (2S)-2-acetolactate + CO2. Its pathway is amino-acid biosynthesis; L-isoleucine biosynthesis; L-isoleucine from 2-oxobutanoate: step 1/4. It participates in amino-acid biosynthesis; L-valine biosynthesis; L-valine from pyruvate: step 1/4. The polypeptide is Acetolactate synthase small subunit (ilvH) (Synechocystis sp. (strain ATCC 27184 / PCC 6803 / Kazusa)).